Here is a 956-residue protein sequence, read N- to C-terminus: Nitrogen regulatory protein NUT1 (956 aa).

Positions 1–12 (MNPTITEHDFRF) are enriched in basic and acidic residues. 5 disordered regions span residues 1–51 (MNPT…NDAQ), 120–222 (QQEE…PAAA), 240–262 (KTSI…FQVP), 348–373 (GQSI…SQVS), and 524–661 (TLPG…DAPT). Low complexity predominate over residues 15 to 37 (RPAAPGRDPGSDSSDDPLPASLR). Polar residues-rich tracts occupy residues 42–51 (DRQSAFNDAQ), 131–153 (PLKT…QKKS), 167–194 (SHGS…NAIS), and 208–217 (AAQSQFNPQS). Residues 588–613 (NASTTAIPNSQMQYEQQGVQGHTNSP) show a composition bias toward polar residues. Composition is skewed to low complexity over residues 623-633 (SGFSSVVHSRP) and 640-661 (SKNG…DAPT). The GATA-type zinc finger occupies 663-687 (CTNCATQTTPLWRRNPEGQPLCNAC). Positions 708-890 (KKRNRGSGSN…AATRPSGFGT (183 aa)) are disordered. A compositionally biased stretch (polar residues) spans 713–760 (GSGSNVPGATSGSRSKKGATSTAVSGTNTRKNSSLAISRTASTTNVQV). Positions 812–839 (VVPIAAAPPKNMPGPGAAAAARTVALGP) are enriched in low complexity. Composition is skewed to polar residues over residues 849–863 (SPAN…NANH) and 872–881 (PENSTGSNEA).

The protein localises to the nucleus. In terms of biological role, major nitrogen regulatory protein; activates expression of nitrogen-regulated genes. The polypeptide is Nitrogen regulatory protein NUT1 (NUT1) (Pyricularia oryzae (strain 70-15 / ATCC MYA-4617 / FGSC 8958) (Rice blast fungus)).